A 383-amino-acid chain; its full sequence is Glutamate 5-kinase (383 aa).

Lysine 17 serves as a coordination point for ATP. Positions 64, 151, and 165 each coordinate substrate. 185 to 186 (SD) lines the ATP pocket. Residues 291–367 (SGTIRVDAGA…DEIEGILGYN (77 aa)) form the PUA domain.

This sequence belongs to the glutamate 5-kinase family.

Its subcellular location is the cytoplasm. It catalyses the reaction L-glutamate + ATP = L-glutamyl 5-phosphate + ADP. It functions in the pathway amino-acid biosynthesis; L-proline biosynthesis; L-glutamate 5-semialdehyde from L-glutamate: step 1/2. In terms of biological role, catalyzes the transfer of a phosphate group to glutamate to form L-glutamate 5-phosphate. This is Glutamate 5-kinase from Methanosarcina barkeri (strain Fusaro / DSM 804).